We begin with the raw amino-acid sequence, 481 residues long: Sialic acid-binding Ig-like lectin 16 (481 aa).

Residues 1 to 16 form the signal peptide; the sequence is MLLLPLLLPVLGAGSL. At 17–434 the chain is on the extracellular side; sequence NKDPSYSLQV…VHCKSGPMTG (418 aa). The region spanning 19 to 122 is the Ig-like V-type domain; sequence DPSYSLQVQR…DEAWYFFRVE (104 aa). Disulfide bonds link C37–C174, C42–C102, C165–C216, and C259–C306. N43 and N78 each carry an N-linked (GlcNAc...) asparagine glycan. An N-acetylneuraminate-binding site is contributed by R120. Ig-like C2-type domains lie at 147–232, 238–322, and 327–424; these read PDVY…RTVR, LELQ…LDLS, and PENL…LSFS. 2 N-linked (GlcNAc...) asparagine glycosylation sites follow: N338 and N347. A disulfide bond links C363 and C408. Residues 435–455 form a helical membrane-spanning segment; the sequence is VVLVAVGEVAMKILLLCLCLI. Over 456–481 the chain is Cytoplasmic; sequence LLRVRSCRRKAARAALGMEAADAVTD.

Belongs to the immunoglobulin superfamily. SIGLEC (sialic acid binding Ig-like lectin) family. As to expression, expressed in bone marrow, fetal brain, fetal liver, lung and salivary gland. Detected in brain, macrophage, cancerous esophagus and lung at protein level.

It localises to the membrane. Functionally, putative adhesion molecule that mediates sialic-acid dependent binding to cells. This chain is Sialic acid-binding Ig-like lectin 16 (SIGLEC16), found in Homo sapiens (Human).